Consider the following 308-residue polypeptide: Dioxygenase peniF (308 aa).

Residues His144 and His225 each coordinate Fe cation.

Belongs to the PhyH family. Homodimer. Fe cation is required as a cofactor.

Dioxygenase; part of the gene cluster that mediates the biosynthesis of penifulvin A, a potent insecticidal sesquiterpene that features a [5.5.5.6]dioxafenestrane ring. The first step of the pathway is performed by the sesquiterpene cyclase peniA that generates the angular triquinane scaffold silphinene via cyclization of the linear farnesyl pyrophosphate (FPP). The cytochrome P450 monooxygenase peniB and the flavin-dependent monooxygenase peniC then catalyze a series of oxidation reactions to transform silphinene into penifulvin A. The dioxygenases peniD and peniF, as well as the acetyltransferase peniE, do not seem to be involved in the biosynthesis of penifulvin A. This chain is Dioxygenase peniF, found in Penicillium patulum (Penicillium griseofulvum).